The chain runs to 118 residues: Holo-[acyl-carrier-protein] synthase (118 aa).

Positions 8 and 58 each coordinate Mg(2+).

This sequence belongs to the P-Pant transferase superfamily. AcpS family. Mg(2+) serves as cofactor.

It localises to the cytoplasm. The catalysed reaction is apo-[ACP] + CoA = holo-[ACP] + adenosine 3',5'-bisphosphate + H(+). Its function is as follows. Transfers the 4'-phosphopantetheine moiety from coenzyme A to a Ser of acyl-carrier-protein. This is Holo-[acyl-carrier-protein] synthase from Listeria monocytogenes serotype 4b (strain CLIP80459).